Reading from the N-terminus, the 642-residue chain is Phosphomethylpyrimidine synthase (642 aa).

Substrate-binding positions include Asn-235, Met-264, Tyr-293, His-329, 349–351 (SRG), 390–393 (DGLR), and Glu-429. His-433 contacts Zn(2+). Tyr-456 contacts substrate. His-497 contributes to the Zn(2+) binding site. [4Fe-4S] cluster is bound by residues Cys-577, Cys-580, and Cys-585.

This sequence belongs to the ThiC family. As to quaternary structure, homodimer. The cofactor is [4Fe-4S] cluster.

The enzyme catalyses 5-amino-1-(5-phospho-beta-D-ribosyl)imidazole + S-adenosyl-L-methionine = 4-amino-2-methyl-5-(phosphooxymethyl)pyrimidine + CO + 5'-deoxyadenosine + formate + L-methionine + 3 H(+). The protein operates within cofactor biosynthesis; thiamine diphosphate biosynthesis. Functionally, catalyzes the synthesis of the hydroxymethylpyrimidine phosphate (HMP-P) moiety of thiamine from aminoimidazole ribotide (AIR) in a radical S-adenosyl-L-methionine (SAM)-dependent reaction. This Alteromonas mediterranea (strain DSM 17117 / CIP 110805 / LMG 28347 / Deep ecotype) protein is Phosphomethylpyrimidine synthase.